Consider the following 320-residue polypeptide: 4-hydroxyproline 2-epimerase (320 aa).

The active-site Proton acceptor is the cysteine 98. Substrate contacts are provided by residues 99 to 100 (GH), histidine 218, and aspartate 242. Residue cysteine 246 is the Proton donor of the active site. 247-248 (GT) serves as a coordination point for substrate.

It belongs to the proline racemase family.

The catalysed reaction is trans-4-hydroxy-L-proline = cis-4-hydroxy-D-proline. Catalyzes the epimerization of trans-4-hydroxy-L-proline (t4LHyp) to cis-4-hydroxy-D-proline (c4DHyp). Is likely involved in a degradation pathway that converts t4LHyp to alpha-ketoglutarate. Displays no proline racemase activity. This chain is 4-hydroxyproline 2-epimerase, found in Burkholderia pseudomallei (strain 1710b).